The sequence spans 199 residues: 3-isopropylmalate dehydratase small subunit (199 aa).

Belongs to the LeuD family. LeuD type 1 subfamily. As to quaternary structure, heterodimer of LeuC and LeuD.

It carries out the reaction (2R,3S)-3-isopropylmalate = (2S)-2-isopropylmalate. It functions in the pathway amino-acid biosynthesis; L-leucine biosynthesis; L-leucine from 3-methyl-2-oxobutanoate: step 2/4. Functionally, catalyzes the isomerization between 2-isopropylmalate and 3-isopropylmalate, via the formation of 2-isopropylmaleate. In Mycobacteroides abscessus (strain ATCC 19977 / DSM 44196 / CCUG 20993 / CIP 104536 / JCM 13569 / NCTC 13031 / TMC 1543 / L948) (Mycobacterium abscessus), this protein is 3-isopropylmalate dehydratase small subunit.